Consider the following 138-residue polypeptide: Large ribosomal subunit protein uL16 (138 aa).

Residues 1 to 13 are compositionally biased toward basic residues; it reads MLQPKRRKYRKEQ. A disordered region spans residues 1–20; it reads MLQPKRRKYRKEQKGRNTGI.

This sequence belongs to the universal ribosomal protein uL16 family. In terms of assembly, part of the 50S ribosomal subunit.

In terms of biological role, binds 23S rRNA and is also seen to make contacts with the A and possibly P site tRNAs. This Burkholderia mallei (strain NCTC 10247) protein is Large ribosomal subunit protein uL16.